A 180-amino-acid chain; its full sequence is MKQCIAFMAILALSLSAISEAKGGRGVRSSGYSRPVATKPAPAPKQTQTQQQSQQPDATFGQQNMQNTATNTPNNPNNRLASFATGAAAGYLLSEVLSPTEAQAQMATDQPLQPLNAQPNQSTVATFKALDQSNPAWVGMAGEQNLFCLNGALYLVNKNNHQIGAVTDNQAQAIACQVTQ.

The signal sequence occupies residues 1–21; the sequence is MKQCIAFMAILALSLSAISEA. Positions 23-81 are disordered; the sequence is GGRGVRSSGYSRPVATKPAPAPKQTQTQQQSQQPDATFGQQNMQNTATNTPNNPNNRLA. Residues 27 to 78 are compositionally biased toward low complexity; the sequence is VRSSGYSRPVATKPAPAPKQTQTQQQSQQPDATFGQQNMQNTATNTPNNPNN.

This is an uncharacterized protein from Pasteurella multocida (strain Pm70).